Consider the following 825-residue polypeptide: NT-3 growth factor receptor (825 aa).

An N-terminal signal peptide occupies residues M1–A31. Cystine bridges form between C32/C38 and C36/C45. Over C32–T429 the chain is Extracellular. N-linked (GlcNAc...) asparagine glycans are attached at residues N68, N72, and N79. LRR repeat units follow at residues G104–K125 and H128–T149. N-linked (GlcNAc...) asparagine glycans are attached at residues N133 and N163. The LRRCT domain occupies N160 to L209. Cystine bridges form between C164–C189 and C166–C207. N-linked (GlcNAc...) asparagine glycosylation is found at N203, N218, N232, N259, N267, N272, and N294. 2 Ig-like C2-type domains span residues P210–T300 and S309–E382. C231 and C284 are disulfide-bonded. C320 and C362 are joined by a disulfide. N375 and N388 each carry an N-linked (GlcNAc...) asparagine glycan. The helical transmembrane segment at F430–I453 threads the bilayer. Residues N454 to G825 are Cytoplasmic-facing. Y516 is modified (phosphotyrosine; by autocatalysis). Positions I538 to G814 constitute a Protein kinase domain. Residues L544–V552 and K572 contribute to the ATP site. D679 serves as the catalytic Proton acceptor. Phosphotyrosine; by autocatalysis occurs at positions 705, 709, 710, and 820.

This sequence belongs to the protein kinase superfamily. Tyr protein kinase family. Insulin receptor subfamily. Exists in a dynamic equilibrium between monomeric (low affinity) and dimeric (high affinity) structures. Binds SH2B2. Interacts with SQSTM1 and KIDINS220. Interacts with PTPRS. Interacts with MAPK8IP3/JIP3. In terms of processing, ligand-mediated auto-phosphorylation. As to expression, preferentially in the brain, low levels in the ovaries.

The protein localises to the membrane. It catalyses the reaction L-tyrosyl-[protein] + ATP = O-phospho-L-tyrosyl-[protein] + ADP + H(+). Its function is as follows. Receptor tyrosine kinase involved in nervous system and probably heart development. Upon binding of its ligand NTF3/neurotrophin-3, NTRK3 autophosphorylates and activates different signaling pathways, including the phosphatidylinositol 3-kinase/AKT and the MAPK pathways, that control cell survival and differentiation. This is NT-3 growth factor receptor (NTRK3) from Sus scrofa (Pig).